The following is a 435-amino-acid chain: Sex peptide receptor (435 aa).

Residues 1–93 (MDNYTDVLYQ…PLEYAMPLYG (93 aa)) lie on the Extracellular side of the membrane. A helical transmembrane segment spans residues 94–114 (YCMPFLLIITIISNSLIVLVL). At 115–124 (SKKSMATPTN) the chain is on the cytoplasmic side. The helical transmembrane segment at 125 to 145 (FVLMGMAICDMLTVIFPAPGL) threads the bilayer. The Extracellular segment spans residues 146–168 (WYMYTFGNHYKPLHPVSMCLAYS). A helical transmembrane segment spans residues 169 to 189 (IFNEIMPAMCHTISVWLTLAL). At 190 to 211 (AVQRYIYVCHAPMARTWCTMPR) the chain is on the cytoplasmic side. A helical transmembrane segment spans residues 212–229 (VRRCTAYIALLAFLHQLP). Over 230 to 276 (RFFDRTYMPLVIEWNGSPTEVCHLETSMWVHDYIGVDLYYTSYYLFR) the chain is Extracellular. A helical membrane pass occupies residues 277-297 (VLFVHLLPCIILVTLNILLFA). Topologically, residues 298–327 (AMRQAQERRKLLFRENRKKECKKLRETNCT) are cytoplasmic. The helical transmembrane segment at 328–348 (TLMLIVVVSVFLLAEIPIAVV) threads the bilayer. The Extracellular segment spans residues 349-368 (TAMHIVSSLIIEFLDYGLAN). A helical transmembrane segment spans residues 369–389 (ICIMLTNFFLVFSYPINFGIY). Residues 390-435 (CGMSRQFRETFKEIFLGRLMAKKDSSTKYSIVNGARTCTNTNETVL) are Cytoplasmic-facing.

It belongs to the G-protein coupled receptor 1 family. In terms of tissue distribution, in the female, expressed in the reproductive organs; strongly expressed in the spermathecae and the lower oviduct. No expression in the male reproductive organs. In the central nervous system of both sexes, it is expressed in the brain and ventral nerve cord (VNC); strongly expressed in the ventral regions of the suboesophageal ganglion, the cervical connective and in many nerve roots of the brain and VNC. Expressed in the s-LNvs and l-LNvs pdf neurons (at protein level).

It localises to the cell membrane. Functionally, receptor for two functionally unrelated ligands; SP (A70A) for controlling reproductive behaviors and MIP for controlling sleep behavior. MIP-SPR pathway functions as a sleep homeostat which perceives the need for sleep and stabilizes it by providing a slow-acting inhibitory input to the fly arousal system that involve the pigment dispersing factor (pdf) neurons. SP-SPR is one of the multiple SP pathways that induce female post-mating behavioral responses (PMR) such as the suppression of mating receptivity and initiation of egg laying. The PMR switch is achieved by mediating the synaptic output of neurons such as those expressing fruitless (fru), double sex (dsx) and pickpocket (ppk). This chain is Sex peptide receptor, found in Drosophila melanogaster (Fruit fly).